Reading from the N-terminus, the 204-residue chain is Thiamine-phosphate synthase (204 aa).

Residues 32–36 (QLRMK) and Asp64 contribute to the 4-amino-2-methyl-5-(diphosphooxymethyl)pyrimidine site. Mg(2+) contacts are provided by Asp65 and Asp84. Thr103 contacts 4-amino-2-methyl-5-(diphosphooxymethyl)pyrimidine. 129–131 (TTT) provides a ligand contact to 2-[(2R,5Z)-2-carboxy-4-methylthiazol-5(2H)-ylidene]ethyl phosphate. Lys132 contributes to the 4-amino-2-methyl-5-(diphosphooxymethyl)pyrimidine binding site. Gly165 serves as a coordination point for 2-[(2R,5Z)-2-carboxy-4-methylthiazol-5(2H)-ylidene]ethyl phosphate.

It belongs to the thiamine-phosphate synthase family. The cofactor is Mg(2+).

It catalyses the reaction 2-[(2R,5Z)-2-carboxy-4-methylthiazol-5(2H)-ylidene]ethyl phosphate + 4-amino-2-methyl-5-(diphosphooxymethyl)pyrimidine + 2 H(+) = thiamine phosphate + CO2 + diphosphate. The enzyme catalyses 2-(2-carboxy-4-methylthiazol-5-yl)ethyl phosphate + 4-amino-2-methyl-5-(diphosphooxymethyl)pyrimidine + 2 H(+) = thiamine phosphate + CO2 + diphosphate. It carries out the reaction 4-methyl-5-(2-phosphooxyethyl)-thiazole + 4-amino-2-methyl-5-(diphosphooxymethyl)pyrimidine + H(+) = thiamine phosphate + diphosphate. The protein operates within cofactor biosynthesis; thiamine diphosphate biosynthesis; thiamine phosphate from 4-amino-2-methyl-5-diphosphomethylpyrimidine and 4-methyl-5-(2-phosphoethyl)-thiazole: step 1/1. In terms of biological role, condenses 4-methyl-5-(beta-hydroxyethyl)thiazole monophosphate (THZ-P) and 2-methyl-4-amino-5-hydroxymethyl pyrimidine pyrophosphate (HMP-PP) to form thiamine monophosphate (TMP). This Bacteroides fragilis (strain YCH46) protein is Thiamine-phosphate synthase.